The following is a 318-amino-acid chain: Gamma-glutamyl hydrolase (318 aa).

The first 24 residues, Met-1 to Ser-24, serve as a signal peptide directing secretion. The 294-residue stretch at Ala-25 to Asp-318 folds into the Gamma-glutamyl hydrolase domain. Asn-116 is a glycosylation site (N-linked (GlcNAc...) asparagine). The active-site Nucleophile is the Cys-134. N-linked (GlcNAc...) asparagine glycans are attached at residues Asn-163 and Asn-203. The Proton donor role is filled by His-244. The N-linked (GlcNAc...) asparagine glycan is linked to Asn-307.

Belongs to the peptidase C26 family. Homodimer.

Its subcellular location is the secreted. The protein resides in the extracellular space. The protein localises to the lysosome. It localises to the melanosome. It catalyses the reaction (6S)-5,6,7,8-tetrahydrofolyl-(gamma-L-Glu)(n) + (n-1) H2O = (6S)-5,6,7,8-tetrahydrofolate + (n-1) L-glutamate. In terms of biological role, hydrolyzes the polyglutamate sidechains of pteroylpolyglutamates. Progressively removes gamma-glutamyl residues from pteroylpoly-gamma-glutamate to yield pteroyl-alpha-glutamate (folic acid) and free glutamate. May play an important role in the bioavailability of dietary pteroylpolyglutamates and in the metabolism of pteroylpolyglutamates and antifolates. Exhibits either endo- or exopeptidase activity depending upon the tissue of origin. When secreted, it acts primarily as an endopeptidase. The chain is Gamma-glutamyl hydrolase (GGH) from Bos taurus (Bovine).